The following is a 113-amino-acid chain: Dolichyl-diphosphooligosaccharide--protein glycosyltransferase subunit DAD1 (113 aa).

Serine 2 is subject to N-acetylserine. Over 2–30 (SASVVSVISRFLEEYLSSTPQRLKLLDAY) the chain is Cytoplasmic. Residues 31-51 (LLYILLTGALQFGYCLLVGTF) traverse the membrane as a helical segment. Proline 52 is a topological domain (lumenal). Residues 53–73 (FNSFLSGFISCVGSFILAVCL) traverse the membrane as a helical segment. At 74–92 (RIQINPQNKADFQGISPER) the chain is on the cytoplasmic side. A helical membrane pass occupies residues 93–113 (AFADFLFASTILHLVVMNFVG).

The protein belongs to the DAD/OST2 family. In terms of assembly, component of the oligosaccharyltransferase (OST) complex. OST exists in two different complex forms which contain common core subunits RPN1, RPN2, OST48, OST4, DAD1 and TMEM258, either STT3A or STT3B as catalytic subunits, and form-specific accessory subunits. STT3A complex assembly occurs through the formation of 3 subcomplexes. Subcomplex 1 contains RPN1 and TMEM258, subcomplex 2 contains the STT3A-specific subunits STT3A, DC2/OSTC, and KCP2 as well as the core subunit OST4, and subcomplex 3 contains RPN2, DAD1, and OST48. The STT3A complex can form stable complexes with the Sec61 complex or with both the Sec61 and TRAP complexes.

Its subcellular location is the endoplasmic reticulum membrane. The protein operates within protein modification; protein glycosylation. Subunit of the oligosaccharyl transferase (OST) complex that catalyzes the initial transfer of a defined glycan (Glc(3)Man(9)GlcNAc(2) in eukaryotes) from the lipid carrier dolichol-pyrophosphate to an asparagine residue within an Asn-X-Ser/Thr consensus motif in nascent polypeptide chains, the first step in protein N-glycosylation. N-glycosylation occurs cotranslationally and the complex associates with the Sec61 complex at the channel-forming translocon complex that mediates protein translocation across the endoplasmic reticulum (ER). All subunits are required for a maximal enzyme activity. The chain is Dolichyl-diphosphooligosaccharide--protein glycosyltransferase subunit DAD1 from Mus musculus (Mouse).